The chain runs to 438 residues: MHIAVVGLSHRTAPVEVREKLSIPEQTMEESLQNLRGHDQVLEASILSTCNRLEIYTLVRNPELGISAVREFLSSHSGLETGDLKPHLFAYHHEDAVGHLLRVAAGLDSLVLGEGQILSQVKKMMRLGQEHKSLGPILNRLLTQAVSTGKRVRSETNLGTGAVSISSAAVELAQLKLGQSRGLDELVTLEDEQVAVVGAGRMSRLLLQHLQAKGASGVVVLNRTVARAEALAADFPTLPVQCRPLKDLDHCLSTCSLIFTSTAADDPIIDAERLSKLNRRSSLRLIDIGVPRNIAADVEGIGGVDAHDVDDLKEVVERNQEARQQVAREAQGLLDGEARQFLEWWDSLEAVPTINRLRSSMESIRSEELMKALSRMGPDFSARERKVVEALSKGIINKILHTPVTALRSPQPRSDRQNALSVVERLFDLQADEDSVQN.

Residues 49–52 (TCNR), Ser109, 114–116 (EGQ), and Gln120 contribute to the substrate site. Cys50 (nucleophile) is an active-site residue. 198 to 203 (GAGRMS) serves as a coordination point for NADP(+).

It belongs to the glutamyl-tRNA reductase family. Homodimer.

The catalysed reaction is (S)-4-amino-5-oxopentanoate + tRNA(Glu) + NADP(+) = L-glutamyl-tRNA(Glu) + NADPH + H(+). Its pathway is porphyrin-containing compound metabolism; protoporphyrin-IX biosynthesis; 5-aminolevulinate from L-glutamyl-tRNA(Glu): step 1/2. The protein operates within porphyrin-containing compound metabolism; chlorophyll biosynthesis. Its function is as follows. Catalyzes the NADPH-dependent reduction of glutamyl-tRNA(Glu) to glutamate 1-semialdehyde (GSA). In Synechococcus sp. (strain WH7803), this protein is Glutamyl-tRNA reductase.